The chain runs to 497 residues: NADH-ubiquinone oxidoreductase chain 4 (497 aa).

The next 14 helical transmembrane spans lie at 3-23 (FLLY…LLII), 42-62 (LFFS…SDNI), 94-114 (ISLL…LISW), 122-142 (NSFI…FCVL), 144-164 (LVFF…LIGV), 178-198 (LFFY…VIYS), 220-240 (ILWA…PFHI), 250-270 (PTVG…YGLL), 276-296 (IFCD…LLGI), 313-333 (IAYA…TSNI), 340-360 (VFLM…IGCV), 374-394 (GLVS…LSNI), 418-438 (FAAL…IWLY), and 463-483 (VVGF…SYII).

Belongs to the complex I subunit 4 family.

It localises to the mitochondrion membrane. It catalyses the reaction a ubiquinone + NADH + 5 H(+)(in) = a ubiquinol + NAD(+) + 4 H(+)(out). In terms of biological role, core subunit of the mitochondrial membrane respiratory chain NADH dehydrogenase (Complex I) that is believed to belong to the minimal assembly required for catalysis. Complex I functions in the transfer of electrons from NADH to the respiratory chain. The immediate electron acceptor for the enzyme is believed to be ubiquinone. This is NADH-ubiquinone oxidoreductase chain 4 (ND4) from Acanthamoeba castellanii (Amoeba).